The sequence spans 467 residues: tRNA modification GTPase MnmE (467 aa).

3 residues coordinate (6S)-5-formyl-5,6,7,8-tetrahydrofolate: Arg-25, Glu-87, and Lys-130. The region spanning 226-389 is the TrmE-type G domain; the sequence is GLSVVLAGQP…LRGELLRIAG (164 aa). Asn-236 provides a ligand contact to K(+). GTP is bound by residues 236-241, 255-261, and 280-283; these read NVGKSS, TPIAGTT, and DTAG. Residue Ser-240 participates in Mg(2+) binding. 3 residues coordinate K(+): Thr-255, Ile-257, and Thr-260. Thr-261 contacts Mg(2+). Residue Lys-467 participates in (6S)-5-formyl-5,6,7,8-tetrahydrofolate binding.

The protein belongs to the TRAFAC class TrmE-Era-EngA-EngB-Septin-like GTPase superfamily. TrmE GTPase family. Homodimer. Heterotetramer of two MnmE and two MnmG subunits. It depends on K(+) as a cofactor.

The protein resides in the cytoplasm. Exhibits a very high intrinsic GTPase hydrolysis rate. Involved in the addition of a carboxymethylaminomethyl (cmnm) group at the wobble position (U34) of certain tRNAs, forming tRNA-cmnm(5)s(2)U34. This is tRNA modification GTPase MnmE from Burkholderia thailandensis (strain ATCC 700388 / DSM 13276 / CCUG 48851 / CIP 106301 / E264).